A 348-amino-acid chain; its full sequence is S-adenosylmethionine:tRNA ribosyltransferase-isomerase (348 aa).

It belongs to the QueA family. Monomer.

The protein localises to the cytoplasm. It catalyses the reaction 7-aminomethyl-7-carbaguanosine(34) in tRNA + S-adenosyl-L-methionine = epoxyqueuosine(34) in tRNA + adenine + L-methionine + 2 H(+). The protein operates within tRNA modification; tRNA-queuosine biosynthesis. In terms of biological role, transfers and isomerizes the ribose moiety from AdoMet to the 7-aminomethyl group of 7-deazaguanine (preQ1-tRNA) to give epoxyqueuosine (oQ-tRNA). This chain is S-adenosylmethionine:tRNA ribosyltransferase-isomerase, found in Polynucleobacter asymbioticus (strain DSM 18221 / CIP 109841 / QLW-P1DMWA-1) (Polynucleobacter necessarius subsp. asymbioticus).